Here is a 381-residue protein sequence, read N- to C-terminus: Alkanesulfonate monooxygenase (381 aa).

It belongs to the SsuD family. As to quaternary structure, homotetramer.

It catalyses the reaction an alkanesulfonate + FMNH2 + O2 = an aldehyde + FMN + sulfite + H2O + 2 H(+). Catalyzes the desulfonation of aliphatic sulfonates. The sequence is that of Alkanesulfonate monooxygenase from Cronobacter sakazakii (strain ATCC BAA-894) (Enterobacter sakazakii).